A 459-amino-acid polypeptide reads, in one-letter code: tRNA modification GTPase MnmE (459 aa).

3 residues coordinate (6S)-5-formyl-5,6,7,8-tetrahydrofolate: Arg23, Glu88, and Arg127. Residues Gly223–Phe381 enclose the TrmE-type G domain. Position 233 (Asn233) interacts with K(+). Residues Asn233–Ser238, Thr252–Thr258, and Asp277–Gly280 contribute to the GTP site. Residue Ser237 coordinates Mg(2+). K(+) contacts are provided by Thr252, Val254, and Thr257. Thr258 provides a ligand contact to Mg(2+). Lys459 provides a ligand contact to (6S)-5-formyl-5,6,7,8-tetrahydrofolate.

It belongs to the TRAFAC class TrmE-Era-EngA-EngB-Septin-like GTPase superfamily. TrmE GTPase family. Homodimer. Heterotetramer of two MnmE and two MnmG subunits. The cofactor is K(+).

The protein localises to the cytoplasm. Functionally, exhibits a very high intrinsic GTPase hydrolysis rate. Involved in the addition of a carboxymethylaminomethyl (cmnm) group at the wobble position (U34) of certain tRNAs, forming tRNA-cmnm(5)s(2)U34. This chain is tRNA modification GTPase MnmE, found in Clostridium novyi (strain NT).